We begin with the raw amino-acid sequence, 340 residues long: Glycerol-3-phosphate dehydrogenase [NAD(P)+] (340 aa).

Residues Trp11, Arg33, and Lys110 each coordinate NADPH. Residues Lys110, Gly144, and Ser146 each contribute to the sn-glycerol 3-phosphate site. Residue Ala148 coordinates NADPH. 5 residues coordinate sn-glycerol 3-phosphate: Lys199, Asp252, Ser262, Arg263, and Asn264. Lys199 (proton acceptor) is an active-site residue. Position 263 (Arg263) interacts with NADPH. Val287 and Glu289 together coordinate NADPH.

It belongs to the NAD-dependent glycerol-3-phosphate dehydrogenase family.

Its subcellular location is the cytoplasm. It carries out the reaction sn-glycerol 3-phosphate + NAD(+) = dihydroxyacetone phosphate + NADH + H(+). The enzyme catalyses sn-glycerol 3-phosphate + NADP(+) = dihydroxyacetone phosphate + NADPH + H(+). Its pathway is membrane lipid metabolism; glycerophospholipid metabolism. Functionally, catalyzes the reduction of the glycolytic intermediate dihydroxyacetone phosphate (DHAP) to sn-glycerol 3-phosphate (G3P), the key precursor for phospholipid synthesis. This chain is Glycerol-3-phosphate dehydrogenase [NAD(P)+], found in Polynucleobacter asymbioticus (strain DSM 18221 / CIP 109841 / QLW-P1DMWA-1) (Polynucleobacter necessarius subsp. asymbioticus).